The primary structure comprises 345 residues: Ferrochelatase (345 aa).

Positions 215 and 296 each coordinate Fe cation.

Belongs to the ferrochelatase family.

Its subcellular location is the cytoplasm. It catalyses the reaction heme b + 2 H(+) = protoporphyrin IX + Fe(2+). It participates in porphyrin-containing compound metabolism; protoheme biosynthesis; protoheme from protoporphyrin-IX: step 1/1. Functionally, catalyzes the ferrous insertion into protoporphyrin IX. This Rhodopseudomonas palustris (strain TIE-1) protein is Ferrochelatase.